The sequence spans 451 residues: tRNA modification GTPase MnmE (451 aa).

3 residues coordinate (6S)-5-formyl-5,6,7,8-tetrahydrofolate: arginine 28, glutamate 85, and lysine 124. Positions 220-373 (GLYTVLVGPP…LKTRLRTLLL (154 aa)) constitute a TrmE-type G domain. Asparagine 230 is a K(+) binding site. GTP contacts are provided by residues 230 to 235 (NVGKSS), 249 to 255 (TDVPGTT), and 274 to 277 (DTAG). Serine 234 contacts Mg(2+). K(+) contacts are provided by threonine 249, valine 251, and threonine 254. Residue threonine 255 participates in Mg(2+) binding. Lysine 451 is a (6S)-5-formyl-5,6,7,8-tetrahydrofolate binding site.

Belongs to the TRAFAC class TrmE-Era-EngA-EngB-Septin-like GTPase superfamily. TrmE GTPase family. Homodimer. Heterotetramer of two MnmE and two MnmG subunits. K(+) is required as a cofactor.

It is found in the cytoplasm. In terms of biological role, exhibits a very high intrinsic GTPase hydrolysis rate. Involved in the addition of a carboxymethylaminomethyl (cmnm) group at the wobble position (U34) of certain tRNAs, forming tRNA-cmnm(5)s(2)U34. The protein is tRNA modification GTPase MnmE of Xylella fastidiosa (strain 9a5c).